We begin with the raw amino-acid sequence, 247 residues long: tRNA (guanine-N(1)-)-methyltransferase (247 aa).

S-adenosyl-L-methionine-binding positions include G117 and 136 to 141 (LGDFVL).

Belongs to the RNA methyltransferase TrmD family. As to quaternary structure, homodimer.

Its subcellular location is the cytoplasm. The catalysed reaction is guanosine(37) in tRNA + S-adenosyl-L-methionine = N(1)-methylguanosine(37) in tRNA + S-adenosyl-L-homocysteine + H(+). In terms of biological role, specifically methylates guanosine-37 in various tRNAs. In Myxococcus xanthus (strain DK1622), this protein is tRNA (guanine-N(1)-)-methyltransferase.